The sequence spans 483 residues: Sodium/pantothenate symporter (483 aa).

At 1–2 the chain is on the periplasmic side; the sequence is MQ. The chain crosses the membrane as a helical span at residues 3 to 23; the sequence is LEVILPLVAYLVVVFGISVYA. The Cytoplasmic segment spans residues 24–42; it reads MRKRSTGTFLNEYFLGSRS. The chain crosses the membrane as a helical span at residues 43–63; the sequence is MGGIVLAMTLTATYISASSFI. At 64–73 the chain is on the periplasmic side; sequence GGPGAAYKYG. A helical transmembrane segment spans residues 74–94; that stretch reads LGWVLLAMIQLPAVWLSLGIL. Topologically, residues 95-123 are cytoplasmic; that stretch reads GKKFAILARRYNAVTLNDMLFARYQSRLL. A helical membrane pass occupies residues 124-144; the sequence is VWLASLSLLVAFVGAMTVQFI. Residues 145-157 are Periplasmic-facing; it reads GGARLLETAAGIP. Residues 158–178 traverse the membrane as a helical segment; the sequence is YETGLLIFGISIALYTAFGGF. The Cytoplasmic segment spans residues 179 to 189; that stretch reads RASVLNDTMQG. A helical membrane pass occupies residues 190 to 210; that stretch reads LVMLIGTVVLLIGVVHAAGGL. Over 211 to 232 the chain is Periplasmic; that stretch reads SNAVQTLQTIDPQLVTPQGADD. Residues 233–253 form a helical membrane-spanning segment; it reads ILSPAFMTSFWVLVCFGVIGL. The Cytoplasmic segment spans residues 254–272; it reads PHTAVRCISYKDSKAVHRG. Residues 273 to 293 form a helical membrane-spanning segment; the sequence is IIIGTIVVAILMFGMHLAGAL. At 294–305 the chain is on the periplasmic side; sequence GRAVIPDLTVPD. Residues 306–326 form a helical membrane-spanning segment; the sequence is LVIPTLMVKVLPPFAAGIFLA. Topologically, residues 327–368 are cytoplasmic; it reads APMAAIMSTINAQLLQSSATIIKDLYLNIRPDQMQNETRLKR. Residues 369–389 traverse the membrane as a helical segment; it reads MSAVITLVLGALLLLAAWKPP. The Periplasmic portion of the chain corresponds to 390–391; it reads EM. Residues 392–412 traverse the membrane as a helical segment; the sequence is IIWLNLLAFGGLEAVFLWPLV. Over 413–423 the chain is Cytoplasmic; sequence LGLYWERANAK. The chain crosses the membrane as a helical span at residues 424–444; the sequence is GALSAMIVGGVLYAVLATLNI. Position 445 (Gln445) is a topological domain, periplasmic. Residues 446-466 traverse the membrane as a helical segment; it reads YLGFHPIVPSLLLSLLAFLVG. The Cytoplasmic portion of the chain corresponds to 467–483; the sequence is NRFGTSVPQATVLTTDK.

The protein belongs to the sodium:solute symporter (SSF) (TC 2.A.21) family.

Its subcellular location is the cell inner membrane. It carries out the reaction (R)-pantothenate(in) + Na(+)(in) = (R)-pantothenate(out) + Na(+)(out). Its activity is regulated as follows. Pantothenate uptake is not reduced in osmotically shocked cells or by ATP depletion with arsenate, but is reduced greater than 90% by the dissipation of the membrane electrochemical gradient with 2,4-dinitrophenol. In terms of biological role, catalyzes the sodium-dependent uptake of extracellular pantothenate. This chain is Sodium/pantothenate symporter, found in Escherichia coli (strain K12).